The chain runs to 243 residues: uncharacterized protein (243 aa).

The segment at 71 to 120 is disordered; the sequence is KRTNVSQRNRKKGIKNNRPHKDINSSPDWGNAHRGTDWQSEKANGMNRAK. Residues 78-88 show a composition bias toward basic residues; it reads RNRKKGIKNNR. Ser-96 carries the phosphoserine modification.

This is an uncharacterized protein from Saccharomyces cerevisiae (strain ATCC 204508 / S288c) (Baker's yeast).